Consider the following 428-residue polypeptide: Enolase (428 aa).

Glutamine 165 contacts (2R)-2-phosphoglycerate. Residue glutamate 207 is the Proton donor of the active site. Mg(2+)-binding residues include aspartate 244, glutamate 285, and aspartate 312. Lysine 337, arginine 366, serine 367, and lysine 388 together coordinate (2R)-2-phosphoglycerate. The Proton acceptor role is filled by lysine 337.

This sequence belongs to the enolase family. In terms of assembly, component of the RNA degradosome, a multiprotein complex involved in RNA processing and mRNA degradation. Mg(2+) is required as a cofactor.

The protein localises to the cytoplasm. It is found in the secreted. The protein resides in the cell surface. It catalyses the reaction (2R)-2-phosphoglycerate = phosphoenolpyruvate + H2O. Its pathway is carbohydrate degradation; glycolysis; pyruvate from D-glyceraldehyde 3-phosphate: step 4/5. Functionally, catalyzes the reversible conversion of 2-phosphoglycerate (2-PG) into phosphoenolpyruvate (PEP). It is essential for the degradation of carbohydrates via glycolysis. This Coxiella burnetii (strain Dugway 5J108-111) protein is Enolase.